A 298-amino-acid chain; its full sequence is Ribosomal protein L11 methyltransferase (298 aa).

Residues threonine 148, glycine 169, aspartate 191, and asparagine 233 each contribute to the S-adenosyl-L-methionine site.

This sequence belongs to the methyltransferase superfamily. PrmA family.

It is found in the cytoplasm. It catalyses the reaction L-lysyl-[protein] + 3 S-adenosyl-L-methionine = N(6),N(6),N(6)-trimethyl-L-lysyl-[protein] + 3 S-adenosyl-L-homocysteine + 3 H(+). Methylates ribosomal protein L11. This is Ribosomal protein L11 methyltransferase from Marinobacter nauticus (strain ATCC 700491 / DSM 11845 / VT8) (Marinobacter aquaeolei).